The chain runs to 484 residues: Aldehyde dehydrogenase family 3 member A2 (484 aa).

Topologically, residues 1–463 are cytoplasmic; the sequence is MERQVQRLRQ…FLLKQFNKGR (463 aa). 185–190 lines the NAD(+) pocket; the sequence is GNTAVG. Catalysis depends on residues glutamate 207 and cysteine 241. Residue serine 293 is modified to Phosphoserine. A helical transmembrane segment spans residues 464-484; that stretch reads LQLLLLVCLVAVAAVIVKDQL. The Prevents secretion from ER motif lies at 481 to 484; it reads KDQL.

Belongs to the aldehyde dehydrogenase family. In terms of assembly, homodimer. In terms of processing, the N-terminus is blocked.

The protein resides in the microsome membrane. It localises to the endoplasmic reticulum membrane. It catalyses the reaction an aldehyde + NAD(+) + H2O = a carboxylate + NADH + 2 H(+). The enzyme catalyses a fatty aldehyde + NAD(+) + H2O = a fatty acid + NADH + 2 H(+). It carries out the reaction (2E)-hexadecenal + NAD(+) + H2O = (E)-hexadec-2-enoate + NADH + 2 H(+). The catalysed reaction is hexadecanoate + NADH + 2 H(+) = hexadecanal + NAD(+) + H2O. It catalyses the reaction 22-oxodocosanoate + NAD(+) + H2O = docosanedioate + NADH + 2 H(+). The enzyme catalyses 2,6,10,14-tetramethylpentadecanal + NAD(+) + H2O = 2,6,10,14-tetramethylpentadecanoate + NADH + 2 H(+). It carries out the reaction octadecanal + NAD(+) + H2O = octadecanoate + NADH + 2 H(+). The catalysed reaction is dodecanoate + NADH + 2 H(+) = dodecanal + NAD(+) + H2O. It catalyses the reaction decanal + NAD(+) + H2O = decanoate + NADH + 2 H(+). The enzyme catalyses tetradecanal + NAD(+) + H2O = tetradecanoate + NADH + 2 H(+). It carries out the reaction octanal + NAD(+) + H2O = octanoate + NADH + 2 H(+). The catalysed reaction is heptanal + NAD(+) + H2O = heptanoate + NADH + 2 H(+). It catalyses the reaction (2E,6E)-farnesal + NAD(+) + H2O = (2E,6E)-farnesoate + NADH + 2 H(+). Catalyzes the oxidation of medium and long-chain aliphatic aldehydes to fatty acids. Active on a variety of saturated and unsaturated aliphatic aldehydes between 6 and 24 carbons in length. Responsible for conversion of the sphingosine 1-phosphate (S1P) degradation product hexadecenal to hexadecenoic acid. This Rattus norvegicus (Rat) protein is Aldehyde dehydrogenase family 3 member A2 (Aldh3a2).